The primary structure comprises 196 residues: RNA pyrophosphohydrolase (196 aa).

The Nudix hydrolase domain occupies glycine 6–lysine 149. Positions glycine 38–glycine 59 match the Nudix box motif.

Belongs to the Nudix hydrolase family. RppH subfamily. A divalent metal cation serves as cofactor.

Accelerates the degradation of transcripts by removing pyrophosphate from the 5'-end of triphosphorylated RNA, leading to a more labile monophosphorylated state that can stimulate subsequent ribonuclease cleavage. The chain is RNA pyrophosphohydrolase from Haemophilus influenzae (strain ATCC 51907 / DSM 11121 / KW20 / Rd).